The primary structure comprises 306 residues: Pantothenate kinase (306 aa).

90-97 serves as a coordination point for ATP; that stretch reads GSVAVGKS.

The protein belongs to the prokaryotic pantothenate kinase family.

The protein localises to the cytoplasm. The enzyme catalyses (R)-pantothenate + ATP = (R)-4'-phosphopantothenate + ADP + H(+). The protein operates within cofactor biosynthesis; coenzyme A biosynthesis; CoA from (R)-pantothenate: step 1/5. The protein is Pantothenate kinase of Lactococcus lactis subsp. cremoris (strain SK11).